A 110-amino-acid polypeptide reads, in one-letter code: uncharacterized protein (110 aa).

It belongs to the HesB/IscA family.

This is an uncharacterized protein from Rickettsia prowazekii (strain Madrid E).